Here is a 640-residue protein sequence, read N- to C-terminus: Probable potassium transport system protein Kup 3 (640 aa).

A compositionally biased stretch (low complexity) spans 1–15 (MTVDAAATPAEAPAT). A disordered region spans residues 1–20 (MTVDAAATPAEAPATNGHGD). Transmembrane regions (helical) follow at residues 30-50 (LTLG…LYAL), 71-91 (VISL…VVIL), 117-137 (ASII…DAVI), 155-175 (AAFD…LFAV), 183-203 (VAAF…IAAF), 224-244 (FMLH…LAVT), 265-285 (WLFV…ALII), 294-314 (PFFL…ATVA), 363-383 (LLLA…ALAS), 385-405 (YGIS…VVIW), 410-430 (WSPL…LTFL), and 437-457 (VLEG…LMYT).

This sequence belongs to the HAK/KUP transporter (TC 2.A.72) family.

The protein resides in the cell inner membrane. The enzyme catalyses K(+)(in) + H(+)(in) = K(+)(out) + H(+)(out). Its function is as follows. Transport of potassium into the cell. Likely operates as a K(+):H(+) symporter. The chain is Probable potassium transport system protein Kup 3 from Bradyrhizobium sp. (strain BTAi1 / ATCC BAA-1182).